Consider the following 297-residue polypeptide: UTP--glucose-1-phosphate uridylyltransferase (297 aa).

It belongs to the UDPGP type 2 family.

The catalysed reaction is alpha-D-glucose 1-phosphate + UTP + H(+) = UDP-alpha-D-glucose + diphosphate. It participates in carbohydrate metabolism; nucleotide-sugar metabolism. Its pathway is bacterial outer membrane biogenesis; lipopolysaccharide biosynthesis. The protein is UTP--glucose-1-phosphate uridylyltransferase (galF) of Escherichia coli O157:H7.